We begin with the raw amino-acid sequence, 282 residues long: 2-dehydro-3-deoxyphosphooctonate aldolase (282 aa).

It belongs to the KdsA family.

It localises to the cytoplasm. It carries out the reaction D-arabinose 5-phosphate + phosphoenolpyruvate + H2O = 3-deoxy-alpha-D-manno-2-octulosonate-8-phosphate + phosphate. It functions in the pathway carbohydrate biosynthesis; 3-deoxy-D-manno-octulosonate biosynthesis; 3-deoxy-D-manno-octulosonate from D-ribulose 5-phosphate: step 2/3. The protein operates within bacterial outer membrane biogenesis; lipopolysaccharide biosynthesis. The sequence is that of 2-dehydro-3-deoxyphosphooctonate aldolase from Granulibacter bethesdensis (strain ATCC BAA-1260 / CGDNIH1).